The chain runs to 95 residues: Aspartyl/glutamyl-tRNA(Asn/Gln) amidotransferase subunit C (95 aa).

Belongs to the GatC family. Heterotrimer of A, B and C subunits.

It catalyses the reaction L-glutamyl-tRNA(Gln) + L-glutamine + ATP + H2O = L-glutaminyl-tRNA(Gln) + L-glutamate + ADP + phosphate + H(+). The enzyme catalyses L-aspartyl-tRNA(Asn) + L-glutamine + ATP + H2O = L-asparaginyl-tRNA(Asn) + L-glutamate + ADP + phosphate + 2 H(+). Its function is as follows. Allows the formation of correctly charged Asn-tRNA(Asn) or Gln-tRNA(Gln) through the transamidation of misacylated Asp-tRNA(Asn) or Glu-tRNA(Gln) in organisms which lack either or both of asparaginyl-tRNA or glutaminyl-tRNA synthetases. The reaction takes place in the presence of glutamine and ATP through an activated phospho-Asp-tRNA(Asn) or phospho-Glu-tRNA(Gln). In Prochlorococcus marinus (strain NATL2A), this protein is Aspartyl/glutamyl-tRNA(Asn/Gln) amidotransferase subunit C.